The primary structure comprises 438 residues: Methylenetetrahydrofolate--tRNA-(uracil-5-)-methyltransferase TrmFO (438 aa).

Residue 9 to 14 coordinates FAD; it reads GGGLAG.

It belongs to the MnmG family. TrmFO subfamily. FAD is required as a cofactor.

Its subcellular location is the cytoplasm. It catalyses the reaction uridine(54) in tRNA + (6R)-5,10-methylene-5,6,7,8-tetrahydrofolate + NADH + H(+) = 5-methyluridine(54) in tRNA + (6S)-5,6,7,8-tetrahydrofolate + NAD(+). The catalysed reaction is uridine(54) in tRNA + (6R)-5,10-methylene-5,6,7,8-tetrahydrofolate + NADPH + H(+) = 5-methyluridine(54) in tRNA + (6S)-5,6,7,8-tetrahydrofolate + NADP(+). In terms of biological role, catalyzes the folate-dependent formation of 5-methyl-uridine at position 54 (M-5-U54) in all tRNAs. The polypeptide is Methylenetetrahydrofolate--tRNA-(uracil-5-)-methyltransferase TrmFO (Lactobacillus gasseri (strain ATCC 33323 / DSM 20243 / BCRC 14619 / CIP 102991 / JCM 1131 / KCTC 3163 / NCIMB 11718 / NCTC 13722 / AM63)).